The primary structure comprises 391 residues: Elongation factor Tu (391 aa).

A tr-type G domain is found at 10–201 (KPHVNIGTIG…EVDKYIPTPE (192 aa)). A G1 region spans residues 19–26 (GHVDHGKT). 19–26 (GHVDHGKT) lines the GTP pocket. A Mg(2+)-binding site is contributed by Thr-26. Residues 55-59 (GITIS) are G2. A G3 region spans residues 76–79 (DCPG). Residues 76–80 (DCPGH) and 131–134 (NKVD) each bind GTP. The interval 131–134 (NKVD) is G4. The tract at residues 169–171 (SAL) is G5.

This sequence belongs to the TRAFAC class translation factor GTPase superfamily. Classic translation factor GTPase family. EF-Tu/EF-1A subfamily. Monomer.

It localises to the cytoplasm. The catalysed reaction is GTP + H2O = GDP + phosphate + H(+). In terms of biological role, GTP hydrolase that promotes the GTP-dependent binding of aminoacyl-tRNA to the A-site of ribosomes during protein biosynthesis. In Chelativorans sp. (strain BNC1), this protein is Elongation factor Tu.